Reading from the N-terminus, the 323-residue chain is Probable inactive poly [ADP-ribose] polymerase SRO2 (323 aa).

The PARP catalytic domain maps to 31–257; it reads SSVSHAGSSF…FASRPSSPWV (227 aa). The RST domain maps to 250 to 321; the sequence is SRPSSPWVSF…IKNHKNRNKV (72 aa).

Interacts with STO.

The protein localises to the nucleus. In terms of biological role, probable inactive ADP-ribosyltransferase that may be involved in stress and developmental responses. This is Probable inactive poly [ADP-ribose] polymerase SRO2 (SRO2) from Arabidopsis thaliana (Mouse-ear cress).